The following is a 210-amino-acid chain: UPF0637 protein RBAM_014510 (210 aa).

This sequence belongs to the UPF0637 family.

The protein is UPF0637 protein RBAM_014510 of Bacillus velezensis (strain DSM 23117 / BGSC 10A6 / LMG 26770 / FZB42) (Bacillus amyloliquefaciens subsp. plantarum).